Here is a 926-residue protein sequence, read N- to C-terminus: LPS-assembly protein LptD (926 aa).

A signal peptide spans 1–22 (MALKSPAFRKKFPLLVTGSLLA). Positions 55-91 (AAAVDLPPRPVHDTTSVSSNGTVTSQGTSSGEQSAGT) are disordered. Over residues 68-91 (TTSVSSNGTVTSQGTSSGEQSAGT) the composition is skewed to low complexity.

The protein belongs to the LptD family. As to quaternary structure, component of the lipopolysaccharide transport and assembly complex. Interacts with LptE and LptA.

The protein localises to the cell outer membrane. Its function is as follows. Together with LptE, is involved in the assembly of lipopolysaccharide (LPS) at the surface of the outer membrane. The sequence is that of LPS-assembly protein LptD from Pseudomonas syringae pv. syringae (strain B728a).